The sequence spans 560 residues: Poly(3-hydroxyalkanoate) polymerase 2 (560 aa).

Cys-296 is a catalytic residue.

Belongs to the PHA/PHB synthase family. Type II PhaC subfamily.

It participates in biopolymer metabolism; poly-(R)-3-hydroxybutanoate biosynthesis. Its function is as follows. Synthesizes poly(3-hydroxyalkanoates) (PHA), complements a mutant of P.putida that does not make PHA. This Ectopseudomonas oleovorans (Pseudomonas oleovorans) protein is Poly(3-hydroxyalkanoate) polymerase 2.